A 213-amino-acid chain; its full sequence is Gas vesicle protein F (213 aa).

Belongs to the gas vesicle GvpF/GvpL family. Binds GvpA.

It is found in the gas vesicle. Its function is as follows. A minor component of the gas vesicle, may be involved in preventing GvpA aggregation during gas vesicle nucleation. Gas vesicles are hollow, gas filled proteinaceous nanostructures found in some microorganisms. They allow positioning of halobacteria at the optimal depth for growth in the poorly aerated, shallow brine pools of their habitat. Functionally, expression of a 9.5 kb mc-vac DNA fragment containing 2 divergently transcribed regions (gvpD-gvpE-gvpF-gvpG-gvpH-gvpI-gvpJ-gvpK-gvpL-gvpM and gvpA-gvpC-gvpN-gvpO) allows H.volcanii to produce gas vesicles. This chain is Gas vesicle protein F, found in Haloferax mediterranei (strain ATCC 33500 / DSM 1411 / JCM 8866 / NBRC 14739 / NCIMB 2177 / R-4) (Halobacterium mediterranei).